A 777-amino-acid polypeptide reads, in one-letter code: Intraflagellar transport protein 80 homolog (777 aa).

WD repeat units follow at residues 12 to 50, 104 to 143, 145 to 185, 186 to 225, 227 to 265, 267 to 306, and 504 to 542; these read KHQE…TSLI, AHCG…RSTL, QQGT…LQWK, AHDG…LYGS, PHEH…YALE, PNTG…WEWK, and KLGT…YVDR.

In terms of assembly, component of the IFT complex B, at least composed of IFT20, IFT22, IFT25, IFT27, IFT46, IFT52, TRAF3IP1/IFT54, IFT57, IFT74, IFT80, IFT81, and IFT88. Interacts with IFT88. Interacts with IFT57 and IFT70B.

It localises to the cytoplasm. The protein resides in the cytoskeleton. It is found in the cilium basal body. The protein localises to the cilium axoneme. Component of the intraflagellar transport (IFT) complex B, which is essential for the development and maintenance of motile and sensory cilia. This Mus musculus (Mouse) protein is Intraflagellar transport protein 80 homolog (Ift80).